Reading from the N-terminus, the 188-residue chain is Peptidyl-tRNA hydrolase (188 aa).

A tRNA-binding site is contributed by Tyr-14. His-19 (proton acceptor) is an active-site residue. Positions 64, 66, and 112 each coordinate tRNA.

The protein belongs to the PTH family. In terms of assembly, monomer.

Its subcellular location is the cytoplasm. It carries out the reaction an N-acyl-L-alpha-aminoacyl-tRNA + H2O = an N-acyl-L-amino acid + a tRNA + H(+). In terms of biological role, hydrolyzes ribosome-free peptidyl-tRNAs (with 1 or more amino acids incorporated), which drop off the ribosome during protein synthesis, or as a result of ribosome stalling. Catalyzes the release of premature peptidyl moieties from peptidyl-tRNA molecules trapped in stalled 50S ribosomal subunits, and thus maintains levels of free tRNAs and 50S ribosomes. The polypeptide is Peptidyl-tRNA hydrolase (Clostridium perfringens (strain SM101 / Type A)).